A 122-amino-acid chain; its full sequence is RxLR effector protein Avh52 (122 aa).

A signal peptide spans 1-21 (MRLTSILVLVIAATFHTTGTA). The RxLR-dEER signature appears at 50–68 (RLLRRVEKDKVDYEQDEQR). Residues 69 to 86 (SFGALKDAVKKLNPVTAV) form a TAP1-binding region. Positions 87–98 (KKFFKQRAKRKK) are nuclear localization signal (NLS).

It belongs to the RxLR effector family. As to quaternary structure, interacts with host acetyl transferase TAP1.

The protein resides in the secreted. Its subcellular location is the host nucleus. Effector that suppresses plant defense responses during the early stages of pathogen infection. Suppresses cell death induced by effectors and PAMPs in plant hosts. Interacts with host acetyltransferase TAP1 and causes TAP1 relocation into the nucleus where it acetylates histones H2A and H3 during early infection, thereby promoting susceptibility of host plant to P.sojae. This Phytophthora sojae (strain P6497) (Soybean stem and root rot agent) protein is RxLR effector protein Avh52.